Reading from the N-terminus, the 322-residue chain is Uridylate-specific endoribonuclease EndoU (322 aa).

A helical membrane pass occupies residues 25-45; the sequence is FVIVGLLITIGILSWHFYEYF. Positions 53–322 constitute an EndoU domain; that stretch reads TPDDVLTLSK…LIGTVYPDSS (270 aa). Active-site residues include histidine 200, histidine 215, and lysine 259.

Belongs to the ENDOU family. Monomer. Mn(2+) serves as cofactor. Predominantly expressed in head.

The protein resides in the membrane. It carries out the reaction a ribonucleotidyl-ribonucleotide-RNA = a 3'-end 2',3'-cyclophospho-ribonucleotide-RNA + a 5'-end dephospho-ribonucleoside-RNA. Endoribonuclease that cleaves single-stranded RNAs at uridylates and releases products that have 2'-3'-cyclic phosphate termini. Preferentially cleaves single stranded RNA at poly-U sites with CU, UC and AU sites cleaved less efficiently. May target mRNAs encoding proteins involved in lipid metabolism to regulate their expression. Regulates levels of TBPH protein, but not mRNA, by an as yet unknown mechanism. Important for neuronal development or function. This is Uridylate-specific endoribonuclease EndoU from Drosophila melanogaster (Fruit fly).